A 233-amino-acid chain; its full sequence is Large ribosomal subunit protein uL1 (233 aa).

The protein belongs to the universal ribosomal protein uL1 family. Part of the 50S ribosomal subunit.

Functionally, binds directly to 23S rRNA. The L1 stalk is quite mobile in the ribosome, and is involved in E site tRNA release. Protein L1 is also a translational repressor protein, it controls the translation of the L11 operon by binding to its mRNA. The protein is Large ribosomal subunit protein uL1 of Vibrio vulnificus (strain CMCP6).